We begin with the raw amino-acid sequence, 815 residues long: 1,4-alpha-glucan branching enzyme GlgB (815 aa).

D405 serves as the catalytic Nucleophile. E458 acts as the Proton donor in catalysis.

It belongs to the glycosyl hydrolase 13 family. GlgB subfamily. In terms of assembly, monomer.

The catalysed reaction is Transfers a segment of a (1-&gt;4)-alpha-D-glucan chain to a primary hydroxy group in a similar glucan chain.. Its pathway is glycan biosynthesis; glycogen biosynthesis. Functionally, catalyzes the formation of the alpha-1,6-glucosidic linkages in glycogen by scission of a 1,4-alpha-linked oligosaccharide from growing alpha-1,4-glucan chains and the subsequent attachment of the oligosaccharide to the alpha-1,6 position. The sequence is that of 1,4-alpha-glucan branching enzyme GlgB from Histophilus somni (strain 2336) (Haemophilus somnus).